A 562-amino-acid polypeptide reads, in one-letter code: MFS-type transporter calB (562 aa).

The segment covering 1 to 16 (MDEVTRTAQRSPSITE) has biased composition (polar residues). Residues 1–45 (MDEVTRTAQRSPSITETHAGETKLAGPGEKEGDVESPVDPSADSE) form a disordered region. The helical transmembrane segment at 57-77 (FAILASVTLSAFLMLLDGSII) threads the bilayer. N-linked (GlcNAc...) asparagine glycosylation occurs at Asn-83. 13 helical membrane-spanning segments follow: residues 94 to 113 (IGWY…PLSG), 123 to 143 (WTYL…GVAN), 154 to 174 (VAGL…AGAV), 184 to 204 (GIYL…GGAL), 213 to 233 (CFYI…FLQV), 256 to 276 (LIGF…LYYG), 284 to 304 (SSQV…FALW), 329 to 349 (INGA…PIYF), 362 to 382 (VNTL…GVLV), 389 to 409 (LPFA…VTLF), 418 to 438 (WIGY…MGII), 451 to 471 (VGIA…VVVG), and 530 to 550 (VFYL…GMGW). Asn-557 carries N-linked (GlcNAc...) asparagine glycosylation.

Belongs to the major facilitator superfamily. TCR/Tet family.

It is found in the cell membrane. In terms of biological role, MFS-type transporter; part of the gene cluster that mediates the biosynthesis of calbistrin A and related compounds. Calbistrin A is a secondary metabolite with an interesting structure that was recently found to have bioactivity against leukemia cells. It consists of two polyketides linked by an ester bond: a bicyclic decalin containing polyketide and a linear 12 carbon dioic acid structure. Required for the secretion of calbistrin A and calbistrin C, as well as of related compounds decumbenone A, B and C. The chain is MFS-type transporter calB from Penicillium decumbens.